Reading from the N-terminus, the 81-residue chain is ATP synthase subunit c (81 aa).

A run of 2 helical transmembrane segments spans residues 7–27 (AASV…PGLG) and 57–77 (FAFM…LLFA).

This sequence belongs to the ATPase C chain family. As to quaternary structure, F-type ATPases have 2 components, F(1) - the catalytic core - and F(0) - the membrane proton channel. F(1) has five subunits: alpha(3), beta(3), gamma(1), delta(1), epsilon(1). F(0) has four main subunits: a(1), b(1), b'(1) and c(10-14). The alpha and beta chains form an alternating ring which encloses part of the gamma chain. F(1) is attached to F(0) by a central stalk formed by the gamma and epsilon chains, while a peripheral stalk is formed by the delta, b and b' chains.

It is found in the cellular thylakoid membrane. F(1)F(0) ATP synthase produces ATP from ADP in the presence of a proton or sodium gradient. F-type ATPases consist of two structural domains, F(1) containing the extramembraneous catalytic core and F(0) containing the membrane proton channel, linked together by a central stalk and a peripheral stalk. During catalysis, ATP synthesis in the catalytic domain of F(1) is coupled via a rotary mechanism of the central stalk subunits to proton translocation. In terms of biological role, key component of the F(0) channel; it plays a direct role in translocation across the membrane. A homomeric c-ring of between 10-14 subunits forms the central stalk rotor element with the F(1) delta and epsilon subunits. The protein is ATP synthase subunit c of Prochlorococcus marinus (strain MIT 9301).